A 417-amino-acid polypeptide reads, in one-letter code: Divinyl chlorophyllide a 8-vinyl-reductase, chloroplastic (417 aa).

The transit peptide at 1–49 (MSLCSSFNVFASYSPKPKTIFKDSKFISQFQVKSSPLASTFHTNESSTS) directs the protein to the chloroplast.

Highly expressed in leaves, stems and flower buds. Detected in roots.

Its subcellular location is the plastid. The protein resides in the chloroplast. It catalyses the reaction protochlorophyllide a + NADP(+) = 3,8-divinyl protochlorophyllide a + NADPH + H(+). Its pathway is porphyrin-containing compound metabolism; chlorophyll biosynthesis. Catalyzes the conversion of divinyl chlorophyllide to monovinyl chlorophyllide. Reduces the 8-vinyl group of the tetrapyrrole to an ethyl group using NADPH as the reductant. The best substrate is (3,8-divinyl)-chlorophyllide a (DV-Chlidea). Very low activity with (3,8-divinyl)-protochlorophyllide a (DV-Pchlidea) and (3,8-divinyl)-magnesium-protoporphyrin IX monomethyl ester (DV-MPE). No activity with (3,8-divinyl)-chlorophyllide b (DV-Chlideb), (3,8-divinyl)-magnesium-protoporphyrin IX (DV-Mg-Proto) and either (3,8-divinyl)-chlorophyll a (DV-Chla) or b (DV-Chlb). The polypeptide is Divinyl chlorophyllide a 8-vinyl-reductase, chloroplastic (DVR) (Arabidopsis thaliana (Mouse-ear cress)).